An 83-amino-acid chain; its full sequence is DNA-directed RNA polymerase subunit omega (83 aa).

This sequence belongs to the RNA polymerase subunit omega family. As to quaternary structure, the RNAP catalytic core consists of 2 alpha, 1 beta, 1 beta' and 1 omega subunit. When a sigma factor is associated with the core the holoenzyme is formed, which can initiate transcription.

It catalyses the reaction RNA(n) + a ribonucleoside 5'-triphosphate = RNA(n+1) + diphosphate. In terms of biological role, promotes RNA polymerase assembly. Latches the N- and C-terminal regions of the beta' subunit thereby facilitating its interaction with the beta and alpha subunits. This chain is DNA-directed RNA polymerase subunit omega, found in Chromohalobacter salexigens (strain ATCC BAA-138 / DSM 3043 / CIP 106854 / NCIMB 13768 / 1H11).